The primary structure comprises 83 residues: Short neurotoxin II (83 aa).

A signal peptide spans 1–21 (MKTLLLTLVVVTVVCLDLGYT). 4 disulfides stabilise this stretch: C24–C45, C38–C62, C64–C75, and C76–C81.

The protein belongs to the three-finger toxin family. Short-chain subfamily. Type I alpha-neurotoxin sub-subfamily. As to expression, expressed by the venom gland.

The protein resides in the secreted. In terms of biological role, binds to muscle nicotinic acetylcholine receptor (nAChR) and inhibit acetylcholine from binding to the receptor, thereby impairing neuromuscular transmission. The polypeptide is Short neurotoxin II (Laticauda colubrina (Yellow-lipped sea krait)).